Here is a 259-residue protein sequence, read N- to C-terminus: PKHD-type hydroxylase PsycPRwf_1523 (259 aa).

In terms of domain architecture, Fe2OG dioxygenase spans 80 to 180; that stretch reads VIMPPLFSAY…RLAMVTWVQS (101 aa). Fe cation-binding residues include H98, D100, and H161. Residue R171 participates in 2-oxoglutarate binding.

Fe(2+) serves as cofactor. Requires L-ascorbate as cofactor.

The polypeptide is PKHD-type hydroxylase PsycPRwf_1523 (Psychrobacter sp. (strain PRwf-1)).